A 122-amino-acid chain; its full sequence is Large ribosomal subunit protein uL14 (122 aa).

It belongs to the universal ribosomal protein uL14 family. As to quaternary structure, part of the 50S ribosomal subunit. Forms a cluster with proteins L3 and L19. In the 70S ribosome, L14 and L19 interact and together make contacts with the 16S rRNA in bridges B5 and B8.

Functionally, binds to 23S rRNA. Forms part of two intersubunit bridges in the 70S ribosome. This chain is Large ribosomal subunit protein uL14, found in Helicobacter pylori (strain J99 / ATCC 700824) (Campylobacter pylori J99).